We begin with the raw amino-acid sequence, 242 residues long: uncharacterized protein (242 aa).

The protein to E.coli MazG and to plasmid pIP1100 erythromycin esterase.

This is an uncharacterized protein from Streptomyces cacaoi.